The primary structure comprises 436 residues: 3-ketoacyl-CoA thiolase (436 aa).

The Acyl-thioester intermediate role is filled by C99. Catalysis depends on proton acceptor residues H392 and C422.

This sequence belongs to the thiolase-like superfamily. Thiolase family. As to quaternary structure, heterotetramer of two alpha chains (FadJ) and two beta chains (FadI).

It is found in the cytoplasm. The catalysed reaction is an acyl-CoA + acetyl-CoA = a 3-oxoacyl-CoA + CoA. The protein operates within lipid metabolism; fatty acid beta-oxidation. Its function is as follows. Catalyzes the final step of fatty acid oxidation in which acetyl-CoA is released and the CoA ester of a fatty acid two carbons shorter is formed. The chain is 3-ketoacyl-CoA thiolase from Salmonella choleraesuis (strain SC-B67).